Here is a 232-residue protein sequence, read N- to C-terminus: Chaperone protein LpfB (232 aa).

Positions 1–23 are cleaved as a signal peptide; that stretch reads MNRSRLISCTALVLALIAQNSFA.

Belongs to the periplasmic pilus chaperone family.

Its subcellular location is the periplasm. Required for the biogenesis of long polar fimbria; binds and interact with LpfA. This Salmonella typhimurium (strain LT2 / SGSC1412 / ATCC 700720) protein is Chaperone protein LpfB (lpfB).